Reading from the N-terminus, the 687-residue chain is DNA-directed RNA polymerase subunit beta' (687 aa).

Residues Cys-69, Cys-71, Cys-87, and Cys-90 each coordinate Zn(2+). Mg(2+) contacts are provided by Asp-495, Asp-497, and Asp-499.

Belongs to the RNA polymerase beta' chain family. RpoC1 subfamily. As to quaternary structure, in plastids the minimal PEP RNA polymerase catalytic core is composed of four subunits: alpha, beta, beta', and beta''. When a (nuclear-encoded) sigma factor is associated with the core the holoenzyme is formed, which can initiate transcription. It depends on Mg(2+) as a cofactor. The cofactor is Zn(2+).

Its subcellular location is the plastid. It is found in the chloroplast. The enzyme catalyses RNA(n) + a ribonucleoside 5'-triphosphate = RNA(n+1) + diphosphate. DNA-dependent RNA polymerase catalyzes the transcription of DNA into RNA using the four ribonucleoside triphosphates as substrates. The polypeptide is DNA-directed RNA polymerase subunit beta' (Solanum tuberosum (Potato)).